Consider the following 423-residue polypeptide: Imidazolonepropionase (423 aa).

Residues His-78 and His-80 each contribute to the Fe(3+) site. The Zn(2+) site is built by His-78 and His-80. Positions 87, 150, and 183 each coordinate 4-imidazolone-5-propanoate. Tyr-150 serves as a coordination point for N-formimidoyl-L-glutamate. Position 247 (His-247) interacts with Fe(3+). His-247 contributes to the Zn(2+) binding site. A 4-imidazolone-5-propanoate-binding site is contributed by Glu-250. Residue Asp-322 participates in Fe(3+) binding. Asp-322 is a Zn(2+) binding site. The N-formimidoyl-L-glutamate site is built by Asn-324 and Gly-326. Ser-327 provides a ligand contact to 4-imidazolone-5-propanoate.

This sequence belongs to the metallo-dependent hydrolases superfamily. HutI family. Zn(2+) is required as a cofactor. Requires Fe(3+) as cofactor.

The protein resides in the cytoplasm. The catalysed reaction is 4-imidazolone-5-propanoate + H2O = N-formimidoyl-L-glutamate. It functions in the pathway amino-acid degradation; L-histidine degradation into L-glutamate; N-formimidoyl-L-glutamate from L-histidine: step 3/3. Functionally, catalyzes the hydrolytic cleavage of the carbon-nitrogen bond in imidazolone-5-propanoate to yield N-formimidoyl-L-glutamate. It is the third step in the universal histidine degradation pathway. The protein is Imidazolonepropionase of Bacillus cereus (strain ATCC 14579 / DSM 31 / CCUG 7414 / JCM 2152 / NBRC 15305 / NCIMB 9373 / NCTC 2599 / NRRL B-3711).